Reading from the N-terminus, the 240-residue chain is FAS1 domain-containing protein AN1527 (240 aa).

The first 24 residues, 1–24, serve as a signal peptide directing secretion; that stretch reads MRQLSTTALVLFLFFYCSISTAWS. An FAS1 domain is found at 91–239; the sequence is EPTISDVLPK…GEVWVIDGVI (149 aa).

The protein localises to the vacuole. This chain is FAS1 domain-containing protein AN1527, found in Emericella nidulans (strain FGSC A4 / ATCC 38163 / CBS 112.46 / NRRL 194 / M139) (Aspergillus nidulans).